We begin with the raw amino-acid sequence, 121 residues long: Flagellar protein FliT (121 aa).

A required for homodimerization region spans residues 1-50 (MNNAPHLYFAWQQLVEKSQLMLRLATEEQWDELIASEMAYVNAVQEIAHL). Residues 60–98 (MQEQLRPMLRLILDNESKVKQLLQIRMDELAKLVGQSSV) form a fliD binding region.

It belongs to the FliT family. Homodimer. Interacts with FliD and FlhC.

It localises to the cytoplasm. The protein localises to the cytosol. Functionally, dual-function protein that regulates the transcription of class 2 flagellar operons and that also acts as an export chaperone for the filament-capping protein FliD. As a transcriptional regulator, acts as an anti-FlhDC factor; it directly binds FlhC, thus inhibiting the binding of the FlhC/FlhD complex to class 2 promoters, resulting in decreased expression of class 2 flagellar operons. As a chaperone, effects FliD transition to the membrane by preventing its premature polymerization, and by directing it to the export apparatus. This is Flagellar protein FliT from Escherichia coli O9:H4 (strain HS).